Here is a 1088-residue protein sequence, read N- to C-terminus: RNA-directed RNA polymerase (1088 aa).

The region spanning 501–687 (LSYGDVTRFL…AKRYIAGGKI (187 aa)) is the RdRp catalytic domain.

It belongs to the reoviridae RNA-directed RNA polymerase family. As to quaternary structure, interacts with VP3 (Potential). Interacts with VP2; this interaction activates VP1. Interacts with NSP5; this interaction is probably necessary for the formation of functional virus factories. Interacts with NSP2; this interaction is weak. The cofactor is Mg(2+).

The protein localises to the virion. It carries out the reaction RNA(n) + a ribonucleoside 5'-triphosphate = RNA(n+1) + diphosphate. Functionally, RNA-directed RNA polymerase that is involved in both transcription and genome replication. Together with VP3 capping enzyme, forms an enzyme complex positioned near the channels situated at each of the five-fold vertices of the core. Following infection, the outermost layer of the virus is lost, leaving a double-layered particle (DLP) made up of the core and VP6 shell. VP1 then catalyzes the transcription of fully conservative plus-strand genomic RNAs that are extruded through the DLP's channels into the cytoplasm where they function as mRNAs for translation of viral proteins. One copy of each of the viral (+)RNAs is also recruited during core assembly, together with newly synthesized polymerase complexes and VP2. The polymerase of these novo-formed particles catalyzes the synthesis of complementary minus-strands leading to dsRNA formation. To do so, the polymerase specifically recognizes and binds 4 bases 5'-UGUG-3' in the conserved 3'-sequence of plus-strand RNA templates. VP2 presumably activates the autoinhibited VP1-RNA complex to coordinate packaging and genome replication. Once dsRNA synthesis is complete, the polymerase switches to the transcriptional mode, thus providing secondary transcription. This chain is RNA-directed RNA polymerase, found in Rotavirus A (isolate RVA/Human/United States/WI61/1983/G9P1A[8]) (RV-A).